Consider the following 255-residue polypeptide: 4-hydroxy-tetrahydrodipicolinate reductase (255 aa).

NAD(+) is bound by residues 9–14 (GFKGRM), 89–91 (GTT), and 115–118 (APNF). His-145 functions as the Proton donor/acceptor in the catalytic mechanism. His-146 provides a ligand contact to (S)-2,3,4,5-tetrahydrodipicolinate. Lys-149 serves as the catalytic Proton donor. 155 to 156 (GT) provides a ligand contact to (S)-2,3,4,5-tetrahydrodipicolinate.

The protein belongs to the DapB family.

Its subcellular location is the cytoplasm. The catalysed reaction is (S)-2,3,4,5-tetrahydrodipicolinate + NAD(+) + H2O = (2S,4S)-4-hydroxy-2,3,4,5-tetrahydrodipicolinate + NADH + H(+). The enzyme catalyses (S)-2,3,4,5-tetrahydrodipicolinate + NADP(+) + H2O = (2S,4S)-4-hydroxy-2,3,4,5-tetrahydrodipicolinate + NADPH + H(+). It functions in the pathway amino-acid biosynthesis; L-lysine biosynthesis via DAP pathway; (S)-tetrahydrodipicolinate from L-aspartate: step 4/4. Its function is as follows. Catalyzes the conversion of 4-hydroxy-tetrahydrodipicolinate (HTPA) to tetrahydrodipicolinate. The protein is 4-hydroxy-tetrahydrodipicolinate reductase of Streptococcus mutans serotype c (strain ATCC 700610 / UA159).